A 524-amino-acid polypeptide reads, in one-letter code: Cytochrome P450 monooxygenase oblB (524 aa).

Helical transmembrane passes span 18 to 38, 225 to 245, and 322 to 342; these read ILNA…GLVI, FHSG…IHLI, and VLIG…VYYI. Position 466 (cysteine 466) interacts with heme.

This sequence belongs to the cytochrome P450 family. Heme is required as a cofactor.

The protein resides in the membrane. It carries out the reaction ophiobolin F + 4 reduced [NADPH--hemoprotein reductase] + 4 O2 = ophiobolin C + 4 oxidized [NADPH--hemoprotein reductase] + 6 H2O + 4 H(+). The protein operates within secondary metabolite biosynthesis; terpenoid biosynthesis. Its function is as follows. Cytochrome P450 monooxygenase; part of the gene cluster that mediates the biosynthesis of the sesterterpenes ophiobolins, fungal phytotoxins with potential anti-cancer activities. The first step of the pathway is performed by the sesterterpene synthase oblA that possesses both prenyl transferase and terpene cyclase activity, converting isopentenyl diphosphate and dimethylallyl diphosphate into geranylfarnesyl diphosphate (GFPP) and further converting GFPP into ophiobolin F, respectively. Other sesterterpenoids (C(25) terpenoids) are found as minor products of oblA. The cytochrome P450 monooxygenase oblB then catalyzes a four-step oxidative transformation of ophiobolin F to yield ophiobolin C. The FAD-dependent oxidoreductase oblC might be involved in a later oxidation step that produces ophiobolin A. This Cochliobolus heterostrophus (strain C5 / ATCC 48332 / race O) (Southern corn leaf blight fungus) protein is Cytochrome P450 monooxygenase oblB.